Here is a 139-residue protein sequence, read N- to C-terminus: Ribonuclease P protein component (139 aa).

A disordered region spans residues 120–139; that stretch reads KPTTGVEYSPKNEKCESVLP. Positions 129 to 139 are enriched in basic and acidic residues; it reads PKNEKCESVLP.

This sequence belongs to the RnpA family. In terms of assembly, consists of a catalytic RNA component (M1 or rnpB) and a protein subunit.

The enzyme catalyses Endonucleolytic cleavage of RNA, removing 5'-extranucleotides from tRNA precursor.. RNaseP catalyzes the removal of the 5'-leader sequence from pre-tRNA to produce the mature 5'-terminus. It can also cleave other RNA substrates such as 4.5S RNA. The protein component plays an auxiliary but essential role in vivo by binding to the 5'-leader sequence and broadening the substrate specificity of the ribozyme. The sequence is that of Ribonuclease P protein component from Chlamydia caviae (strain ATCC VR-813 / DSM 19441 / 03DC25 / GPIC) (Chlamydophila caviae).